Here is a 292-residue protein sequence, read N- to C-terminus: Protoheme IX farnesyltransferase (292 aa).

Helical transmembrane passes span 12 to 32, 43 to 63, 94 to 114, 115 to 135, 144 to 164, 169 to 189, 216 to 236, 239 to 259, and 267 to 287; these read ITWL…PQAS, LLRL…TAAL, LAFG…GVNL, LSAG…TPMK, VGAI…AGGL, WVLF…IAWM, IVIY…LGMS, LYLV…VRVA, and ARGV…LMLL.

Belongs to the UbiA prenyltransferase family. Protoheme IX farnesyltransferase subfamily.

It localises to the cell inner membrane. It carries out the reaction heme b + (2E,6E)-farnesyl diphosphate + H2O = Fe(II)-heme o + diphosphate. Its pathway is porphyrin-containing compound metabolism; heme O biosynthesis; heme O from protoheme: step 1/1. Converts heme B (protoheme IX) to heme O by substitution of the vinyl group on carbon 2 of heme B porphyrin ring with a hydroxyethyl farnesyl side group. This is Protoheme IX farnesyltransferase from Solibacter usitatus (strain Ellin6076).